The sequence spans 248 residues: N-acylneuraminate-9-phosphatase (248 aa).

Residue Asp-12 coordinates Mg(2+). Positions 13, 14, 131, 132, and 164 each coordinate phosphate. Asp-14 contacts Mg(2+). Asp-189 serves as a coordination point for Mg(2+).

The protein belongs to the HAD-like hydrolase superfamily. NANP family. Mg(2+) serves as cofactor.

It catalyses the reaction N-acetylneuraminate 9-phosphate + H2O = N-acetylneuraminate + phosphate. The catalysed reaction is N-glycoloylneuraminate 9-phosphate + H2O = N-glycoloylneuraminate + phosphate. It functions in the pathway amino-sugar metabolism; N-acetylneuraminate biosynthesis. Inhibited by calcium. Inhibited by vanadate, sodium orthovanadate and phosphonate. In terms of biological role, catalyzes the dephosphorylation of N-acylneuraminate 9-phosphate (Neu5Ac-9-P) to N-acetylneuraminic acid (Neu5Ac or sialic acid). Can also use N-glycoloylneuraminate 9-phosphate as substrate. The protein is N-acylneuraminate-9-phosphatase of Homo sapiens (Human).